We begin with the raw amino-acid sequence, 267 residues long: Indole-3-glycerol phosphate synthase (267 aa).

The protein belongs to the TrpC family.

It catalyses the reaction 1-(2-carboxyphenylamino)-1-deoxy-D-ribulose 5-phosphate + H(+) = (1S,2R)-1-C-(indol-3-yl)glycerol 3-phosphate + CO2 + H2O. Its pathway is amino-acid biosynthesis; L-tryptophan biosynthesis; L-tryptophan from chorismate: step 4/5. The chain is Indole-3-glycerol phosphate synthase from Ralstonia pickettii (strain 12J).